The following is a 293-amino-acid chain: Autophagy-related protein 36 (293 aa).

2 stretches are compositionally biased toward polar residues: residues Ile-98 to Pro-108 and Gly-260 to Ser-273. 2 disordered regions span residues Ile-98–Ser-121 and Ser-250–Ser-273.

Interacts with PEX3, ATG8 and ATG11.

The protein localises to the peroxisome. Functionally, required for autophagic breakdown of peroxisomes, called pexophagy, through linking peroxisomes to the autophagy apparatus. Involved in regulation of the glyoxylate cycle. This is Autophagy-related protein 36 (ATG36) from Saccharomyces cerevisiae (strain ATCC 204508 / S288c) (Baker's yeast).